Consider the following 475-residue polypeptide: Histidine--tRNA ligase (475 aa).

The protein belongs to the class-II aminoacyl-tRNA synthetase family. In terms of assembly, homodimer.

The protein localises to the cytoplasm. It carries out the reaction tRNA(His) + L-histidine + ATP = L-histidyl-tRNA(His) + AMP + diphosphate + H(+). The sequence is that of Histidine--tRNA ligase from Flavobacterium johnsoniae (strain ATCC 17061 / DSM 2064 / JCM 8514 / BCRC 14874 / CCUG 350202 / NBRC 14942 / NCIMB 11054 / UW101) (Cytophaga johnsonae).